Here is a 446-residue protein sequence, read N- to C-terminus: MRTLNTSTMEGTGLVAERDFSFRILTACFLSLLILSTLLGNTLVCAAVIRFRHLRSKVTNFFVISLAVSDLLVAVLVMPWKAVAEIAGFWPFGSFCNIWVAFDIMCSTASILNLCVISVDRYWAISSPFRYERKMTPKAAFILISVAWTLSVLISFIPVQLSWHKAKPTGPSEGNATSLGKTINNCDSSLSRTYAISSSLISFYIPVAIMIVTYTRIYRIAQKQIRRISALERAAVHAKNCQTTTGNGNPMECSQPESSFKMSFKRETKVLKTLSVIMGVFVCCWLPFFILNCMVPFCGSGETKPFCIDSITFDVFVWFGWANSSLNPIIYAFNADFRKAFSTLLGCYRLCPTTNNAIETVSINNNGAVVFSSHHEPRGSISKDCNVVYLIPHAVGSSEGLKKEEAVGIAKPLEKLSPALSVILDYDTDVSLEKIQPITQNGQHPT.

At 1–23 (MRTLNTSTMEGTGLVAERDFSFR) the chain is on the extracellular side. N-linked (GlcNAc...) asparagine glycosylation is present at Asn5. The helical transmembrane segment at 24–49 (ILTACFLSLLILSTLLGNTLVCAAVI) threads the bilayer. The Cytoplasmic segment spans residues 50–60 (RFRHLRSKVTN). The helical transmembrane segment at 61 to 87 (FFVISLAVSDLLVAVLVMPWKAVAEIA) threads the bilayer. At 88-96 (GFWPFGSFC) the chain is on the extracellular side. A disulfide bond links Cys96 and Cys186. The helical transmembrane segment at 97-119 (NIWVAFDIMCSTASILNLCVISV) threads the bilayer. Residues 120 to 138 (DRYWAISSPFRYERKMTPK) lie on the Cytoplasmic side of the membrane. The helical transmembrane segment at 139-163 (AAFILISVAWTLSVLISFIPVQLSW) threads the bilayer. The Extracellular segment spans residues 164 to 192 (HKAKPTGPSEGNATSLGKTINNCDSSLSR). Asn175 carries an N-linked (GlcNAc...) asparagine glycan. Residues 193 to 218 (TYAISSSLISFYIPVAIMIVTYTRIY) form a helical membrane-spanning segment. The Cytoplasmic portion of the chain corresponds to 219–272 (RIAQKQIRRISALERAAVHAKNCQTTTGNGNPMECSQPESSFKMSFKRETKVLK). A helical transmembrane segment spans residues 273–299 (TLSVIMGVFVCCWLPFFILNCMVPFCG). Residues 300 to 312 (SGETKPFCIDSIT) lie on the Extracellular side of the membrane. The chain crosses the membrane as a helical span at residues 313-337 (FDVFVWFGWANSSLNPIIYAFNADF). Topologically, residues 338 to 446 (RKAFSTLLGC…PITQNGQHPT (109 aa)) are cytoplasmic. Residues Cys347 and Cys351 are each lipidated (S-palmitoyl cysteine).

It belongs to the G-protein coupled receptor 1 family. As to quaternary structure, interacts with DNAJC14 via its C-terminus. Interacts with DRD2. Interacts with DORIP1.

Its subcellular location is the cell membrane. The protein resides in the endoplasmic reticulum membrane. The protein localises to the cell projection. It is found in the cilium membrane. It localises to the dendrite. Its subcellular location is the dendritic spine. Functionally, dopamine receptor whose activity is mediated by G proteins which activate adenylyl cyclase. The protein is D(1A) dopamine receptor (DRD1) of Bos taurus (Bovine).